Reading from the N-terminus, the 462-residue chain is Cysteine--tRNA ligase (462 aa).

Cys24 contributes to the Zn(2+) binding site. The 'HIGH' region motif lies at 26–36; the sequence is PTVYDDAHLGH. Positions 199, 224, and 228 each coordinate Zn(2+). The short motif at 256–260 is the 'KMSKS' region element; that stretch reads KMSKS. Residue Lys259 coordinates ATP.

This sequence belongs to the class-I aminoacyl-tRNA synthetase family. In terms of assembly, monomer. The cofactor is Zn(2+).

The protein resides in the cytoplasm. The catalysed reaction is tRNA(Cys) + L-cysteine + ATP = L-cysteinyl-tRNA(Cys) + AMP + diphosphate. The polypeptide is Cysteine--tRNA ligase (Campylobacter jejuni subsp. jejuni serotype O:6 (strain 81116 / NCTC 11828)).